Consider the following 886-residue polypeptide: Leucine--tRNA ligase (886 aa).

The short motif at 46 to 56 is the 'HIGH' region element; sequence PYPSGKLHMGH. The short motif at 638–642 is the 'KMSKS' region element; sequence TMSKS. Lys641 is an ATP binding site.

Belongs to the class-I aminoacyl-tRNA synthetase family.

The protein localises to the cytoplasm. The catalysed reaction is tRNA(Leu) + L-leucine + ATP = L-leucyl-tRNA(Leu) + AMP + diphosphate. The sequence is that of Leucine--tRNA ligase from Polaromonas sp. (strain JS666 / ATCC BAA-500).